The chain runs to 159 residues: Phosphopantetheine adenylyltransferase (159 aa).

Thr-9 serves as a coordination point for substrate. ATP-binding positions include Thr-9–Phe-10 and His-17. Residues Lys-41, Leu-73, and Arg-87 each coordinate substrate. ATP contacts are provided by residues Gly-88–Arg-90, Glu-98, and Tyr-123–Thr-129.

Belongs to the bacterial CoaD family. In terms of assembly, homohexamer. Mg(2+) serves as cofactor.

It is found in the cytoplasm. It carries out the reaction (R)-4'-phosphopantetheine + ATP + H(+) = 3'-dephospho-CoA + diphosphate. The protein operates within cofactor biosynthesis; coenzyme A biosynthesis; CoA from (R)-pantothenate: step 4/5. Its function is as follows. Reversibly transfers an adenylyl group from ATP to 4'-phosphopantetheine, yielding dephospho-CoA (dPCoA) and pyrophosphate. The sequence is that of Phosphopantetheine adenylyltransferase from Nitrosomonas europaea (strain ATCC 19718 / CIP 103999 / KCTC 2705 / NBRC 14298).